The sequence spans 132 residues: Small ribosomal subunit protein uS8 (132 aa).

Belongs to the universal ribosomal protein uS8 family. As to quaternary structure, part of the 30S ribosomal subunit. Contacts proteins S5 and S12.

In terms of biological role, one of the primary rRNA binding proteins, it binds directly to 16S rRNA central domain where it helps coordinate assembly of the platform of the 30S subunit. The chain is Small ribosomal subunit protein uS8 from Leifsonia xyli subsp. xyli (strain CTCB07).